Consider the following 153-residue polypeptide: Ubiquitin-conjugating enzyme E2 ubc-18 (153 aa).

Residues 2–149 (SATRRLQKEL…AEEHTRKHAE (148 aa)) form the UBC core domain. The active-site Glycyl thioester intermediate is cysteine 86.

This sequence belongs to the ubiquitin-conjugating enzyme family. In terms of assembly, interacts with E3 ubiquitin-protein ligase wwp-1. Interacts with RBR-type E3 ubiquitin transferase ari-1.1. As to expression, expressed in neurons localized in the head and tail of adults.

It catalyses the reaction S-ubiquitinyl-[E1 ubiquitin-activating enzyme]-L-cysteine + [E2 ubiquitin-conjugating enzyme]-L-cysteine = [E1 ubiquitin-activating enzyme]-L-cysteine + S-ubiquitinyl-[E2 ubiquitin-conjugating enzyme]-L-cysteine.. In terms of biological role, ubiquitin-conjugating enzyme E2. Accepts ubiquitin from the E1 complex and catalyzes its covalent attachment to other proteins. Required for diet restriction-mediated lifespan extension, probably acting as part of a complex with ubiquitin-protein ligase wwp-1. Acts redundantly with lin-35/Rb in the regulation of pharyngeal morphogenesis during embryonic development by negatively regulating the expression of proteins such as sup-35. The polypeptide is Ubiquitin-conjugating enzyme E2 ubc-18 (Caenorhabditis elegans).